A 389-amino-acid polypeptide reads, in one-letter code: MSRRRAIQPSPALRIGPIELASPVVLAPMAGVTNVAFRALCRQLEQSKVGTVSGLYVCEMVTARALIERHPVTMHMTTFSADESPRSLQLYTVDPDTTYAAARMIAGEGLADHIDMNFGCPVPKVTKRGGGAALPFKRRLFGQIVAAAVRATEGTDIPVTVKFRIGIDDAHHTHLDAGRIAEAEGAAAVALHARTAAQRYSGTADWEQIARLKQHVRTIPVLGNGDIYDAGDALAMMSTTGCDGVVIGRGCLGRPWLFAELSAAFTGSPAPTPPTLGEVADIIRRHGTLLAAHFGEDKGMRDIRKHIAWYLHGFPAGSALRRALAMVKTFDELDCLLDRLDGTVPFPDSATGARGRQGSPARVALPDGWLTDPDDCRVPEGADAMGSGG.

FMN-binding positions include proline 28–alanine 30 and glutamine 89. The active-site Proton donor is the cysteine 120. FMN contacts are provided by residues lysine 162, asparagine 224–aspartate 226, and glycine 248–arginine 249.

The protein belongs to the Dus family. It depends on FMN as a cofactor.

It catalyses the reaction a 5,6-dihydrouridine in tRNA + NAD(+) = a uridine in tRNA + NADH + H(+). The catalysed reaction is a 5,6-dihydrouridine in tRNA + NADP(+) = a uridine in tRNA + NADPH + H(+). Functionally, catalyzes the synthesis of 5,6-dihydrouridine (D), a modified base found in the D-loop of most tRNAs, via the reduction of the C5-C6 double bond in target uridines. The polypeptide is Probable tRNA-dihydrouridine synthase (dus) (Mycobacterium tuberculosis (strain CDC 1551 / Oshkosh)).